A 233-amino-acid chain; its full sequence is Large ribosomal subunit protein uL1 (233 aa).

It belongs to the universal ribosomal protein uL1 family. In terms of assembly, part of the 50S ribosomal subunit.

Binds directly to 23S rRNA. The L1 stalk is quite mobile in the ribosome, and is involved in E site tRNA release. Its function is as follows. Protein L1 is also a translational repressor protein, it controls the translation of the L11 operon by binding to its mRNA. The chain is Large ribosomal subunit protein uL1 from Shewanella denitrificans (strain OS217 / ATCC BAA-1090 / DSM 15013).